Reading from the N-terminus, the 230-residue chain is Ribonuclease 3 (230 aa).

The 134-residue stretch at 1 to 134 (MKQLEELLST…FLGALLLDKG (134 aa)) folds into the RNase III domain. Glu47 contributes to the Mg(2+) binding site. The active site involves Asp51. 2 residues coordinate Mg(2+): Asp120 and Glu123. The active site involves Glu123. In terms of domain architecture, DRBM spans 160–229 (DYKTCLQEFL…AKNALAQLSE (70 aa)).

The protein belongs to the ribonuclease III family. In terms of assembly, homodimer. Requires Mg(2+) as cofactor.

It localises to the cytoplasm. It catalyses the reaction Endonucleolytic cleavage to 5'-phosphomonoester.. In terms of biological role, digests double-stranded RNA. Involved in the processing of primary rRNA transcript to yield the immediate precursors to the large and small rRNAs (23S and 16S). Processes some mRNAs, and tRNAs when they are encoded in the rRNA operon. Processes pre-crRNA and tracrRNA of type II CRISPR loci if present in the organism. The chain is Ribonuclease 3 from Streptococcus pyogenes serotype M2 (strain MGAS10270).